Reading from the N-terminus, the 983-residue chain is Bifunctional glutamine synthetase adenylyltransferase/adenylyl-removing enzyme (983 aa).

The adenylyl removase stretch occupies residues 1–468 (MTVENAKALF…KQYAALFAQA (468 aa)). The adenylyl transferase stretch occupies residues 473 to 983 (AASGNLVFTG…FDKLVGHGAD (511 aa)).

The protein belongs to the GlnE family. Mg(2+) is required as a cofactor.

The catalysed reaction is [glutamine synthetase]-O(4)-(5'-adenylyl)-L-tyrosine + phosphate = [glutamine synthetase]-L-tyrosine + ADP. It catalyses the reaction [glutamine synthetase]-L-tyrosine + ATP = [glutamine synthetase]-O(4)-(5'-adenylyl)-L-tyrosine + diphosphate. Its function is as follows. Involved in the regulation of glutamine synthetase GlnA, a key enzyme in the process to assimilate ammonia. When cellular nitrogen levels are high, the C-terminal adenylyl transferase (AT) inactivates GlnA by covalent transfer of an adenylyl group from ATP to specific tyrosine residue of GlnA, thus reducing its activity. Conversely, when nitrogen levels are low, the N-terminal adenylyl removase (AR) activates GlnA by removing the adenylyl group by phosphorolysis, increasing its activity. The regulatory region of GlnE binds the signal transduction protein PII (GlnB) which indicates the nitrogen status of the cell. The protein is Bifunctional glutamine synthetase adenylyltransferase/adenylyl-removing enzyme of Brucella suis biovar 1 (strain 1330).